Consider the following 1567-residue polypeptide: Ice nucleation protein (1567 aa).

Positions 130–185 (PAAEPSAPATQATSATLPTPATPSTQATPSTQSTQSTQSTEATQSTEATPVATVAA) are enriched in low complexity. Disordered stretches follow at residues 130-195 (PAAE…QQHD), 270-329 (YGST…KGSD), 356-378 (AGSESSLTAGYGSTQTARKGSDV), 449-474 (TQTSGSDSSLTAGYGSTQTARKGSDI), 502-529 (SESSLTAGYGSTQTAQQDSSLTTGYGST), 594-620 (QTAGSDSSLTAGYGSTQTAREGSDVTA), 642-668 (QTSGSDSSLTAGYGSTQTARKGSDVTA), 689-716 (TQTSGSDSSLTAGYGSTQTARKGSDVTA), 738-764 (QTSGSDSSLTAGYGSTQTARKGSDVTA), 785-810 (TQTSGSDSSLTAGYGSTQTARKGSDI), 833-860 (TQTSGSDSSLTAGYGSTQTAREGSDVTA), 929-959 (TQTSGSDSSLTAGYGSTQTARKGSDMTAGYG), and 977-1004 (TQTSGSDSSLTAGYGSTQTAREGSDVTA). Residues 270–282 (YGSTQTAQEGSRL) are compositionally biased toward polar residues. Over residues 283–296 (TSGYGSTATSGSDS) the composition is skewed to low complexity. Composition is skewed to polar residues over residues 302 to 325 (YGSTQTAGSESSLTAGYGSTQTAR), 356 to 373 (AGSESSLTAGYGSTQTAR), 449 to 469 (TQTSGSDSSLTAGYGSTQTAR), and 502 to 519 (SESSLTAGYGSTQTAQQD). Over residues 520 to 529 (SSLTTGYGST) the composition is skewed to low complexity. Polar residues-rich tracts occupy residues 594 to 613 (QTAGSDSSLTAGYGSTQTAR), 642 to 661 (QTSGSDSSLTAGYGSTQTAR), 689 to 709 (TQTSGSDSSLTAGYGSTQTAR), 738 to 757 (QTSGSDSSLTAGYGSTQTAR), 785 to 805 (TQTSGSDSSLTAGYGSTQTAR), 833 to 853 (TQTSGSDSSLTAGYGSTQTAR), 929 to 949 (TQTSGSDSSLTAGYGSTQTAR), and 977 to 997 (TQTSGSDSSLTAGYGSTQTAR).

Belongs to the bacterial ice nucleation protein family.

The protein resides in the cell outer membrane. In terms of biological role, ice nucleation proteins enable bacteria to nucleate crystallization in supercooled water. The sequence is that of Ice nucleation protein (inaX) from Xanthomonas campestris pv. translucens.